The chain runs to 296 residues: Sulfotransferase 6B1 (296 aa).

The active-site Proton acceptor is His112. Residues Arg134, Ser142, Tyr197, and 253–255 (RKG) each bind 3'-phosphoadenylyl sulfate.

The protein belongs to the sulfotransferase 1 family.

Its subcellular location is the cytoplasm. The protein resides in the cytosol. It catalyses the reaction thyroxine + 3'-phosphoadenylyl sulfate = thyroxine sulfate + adenosine 3',5'-bisphosphate + H(+). Strongly inhibited by the divalent metal cations Fe(2+), Hg(2+), Co(2+), Zn(2+), Cu(2+) and Cd(2+). Functionally, sulfotransferase that utilizes 3'-phospho-5'-adenylyl sulfate (PAPS) as sulfonate donor to catalyze the sulfate conjugation of a variety of xenobiotic and endogenous compounds, including dopamine, T3 (triiodo-L-thyronine), T4 (thyroxine), flavonoids, isoflavonoids, and other phenolic compounds. The polypeptide is Sulfotransferase 6B1 (Danio rerio (Zebrafish)).